The primary structure comprises 401 residues: CinA-like protein (401 aa).

This sequence belongs to the CinA family.

This is CinA-like protein from Thermosipho melanesiensis (strain DSM 12029 / CIP 104789 / BI429).